The following is a 308-amino-acid chain: tRNA pseudouridine synthase B (308 aa).

Residue D45 is the Nucleophile of the active site.

The protein belongs to the pseudouridine synthase TruB family. Type 1 subfamily.

It carries out the reaction uridine(55) in tRNA = pseudouridine(55) in tRNA. Functionally, responsible for synthesis of pseudouridine from uracil-55 in the psi GC loop of transfer RNAs. The sequence is that of tRNA pseudouridine synthase B from Gloeothece citriformis (strain PCC 7424) (Cyanothece sp. (strain PCC 7424)).